The primary structure comprises 179 residues: Dynein light chain Tctex-type 5 (179 aa).

It belongs to the dynein light chain Tctex-type family. Interacts with ZMYND10.

This Homo sapiens (Human) protein is Dynein light chain Tctex-type 5 (DYNLT5).